An 873-amino-acid polypeptide reads, in one-letter code: Probable beta-glucosidase A (873 aa).

Residues 1–19 (MRFGWLEVAALTAASVANA) form the signal peptide. Asn-71, Asn-222, and Asn-263 each carry an N-linked (GlcNAc...) asparagine glycan. The active site involves Asp-291. 9 N-linked (GlcNAc...) asparagine glycosylation sites follow: Asn-326, Asn-333, Asn-365, Asn-453, Asn-534, Asn-553, Asn-575, Asn-679, and Asn-725. A disordered region spans residues 731 to 764 (DSSDDPNYGWQDSEYIPEGARDGSPQPLLKAGGA).

This sequence belongs to the glycosyl hydrolase 3 family.

Its subcellular location is the secreted. The enzyme catalyses Hydrolysis of terminal, non-reducing beta-D-glucosyl residues with release of beta-D-glucose.. Its pathway is glycan metabolism; cellulose degradation. Its function is as follows. Beta-glucosidases are one of a number of cellulolytic enzymes involved in the degradation of cellulosic biomass. Catalyzes the last step releasing glucose from the inhibitory cellobiose. The polypeptide is Probable beta-glucosidase A (bglA) (Aspergillus fumigatus (strain ATCC MYA-4609 / CBS 101355 / FGSC A1100 / Af293) (Neosartorya fumigata)).